The primary structure comprises 150 residues: Transcription antitermination protein NusB (150 aa).

Belongs to the NusB family.

Its function is as follows. Involved in transcription antitermination. Required for transcription of ribosomal RNA (rRNA) genes. Binds specifically to the boxA antiterminator sequence of the ribosomal RNA (rrn) operons. This Streptococcus pyogenes serotype M1 protein is Transcription antitermination protein NusB.